Reading from the N-terminus, the 802-residue chain is Leucine--tRNA ligase (802 aa).

Residues 40–51 carry the 'HIGH' region motif; it reads PYPSGAGLHVGH. Positions 576-580 match the 'KMSKS' region motif; sequence KMSKS. Residue lysine 579 participates in ATP binding.

Belongs to the class-I aminoacyl-tRNA synthetase family.

The protein resides in the cytoplasm. It carries out the reaction tRNA(Leu) + L-leucine + ATP = L-leucyl-tRNA(Leu) + AMP + diphosphate. The polypeptide is Leucine--tRNA ligase (Bacillus cereus (strain ATCC 10987 / NRS 248)).